The sequence spans 607 residues: Major facilitator superfamily multidrug transporter mdrA (607 aa).

12 helical membrane passes run 77–97, 110–130, 139–159, 170–190, 202–222, 229–249, 305–325, 342–362, 385–405, 413–433, 443–463, and 478–498; these read MTVA…TGGV, VATL…LLWA, QIIF…SAGA, FFAG…IADM, LFAA…GFLG, WVMG…TIFV, PIVF…YMLF, VSSL…TYSV, LPPT…FAWT, IVCI…FLGI, IFAA…GAVF, and WASS…FLFY. The interval 523–583 is disordered; sequence EQMKQAPEPE…ASTRTASSLR (61 aa). Acidic residues predominate over residues 553-564; that stretch reads DVSETESNVEEL. Low complexity predominate over residues 572–583; the sequence is SRASTRTASSLR.

This sequence belongs to the major facilitator superfamily. DHA1 family. Polyamines/proton antiporter (TC 2.A.1.2.16) subfamily.

The protein resides in the cell membrane. Its function is as follows. MFS transporter involved in the basal level of azole susceptibility. Confers resistance to voriconazole and, to a lesser extent, to fluconazole. The polypeptide is Major facilitator superfamily multidrug transporter mdrA (Aspergillus fumigatus (strain ATCC MYA-4609 / CBS 101355 / FGSC A1100 / Af293) (Neosartorya fumigata)).